The primary structure comprises 902 residues: Chitin synthase 3 (902 aa).

The segment covering 1–15 has biased composition (basic and acidic residues); it reads MAYNRLDDDYFDNRR. The disordered stretch occupies residues 1-68; it reads MAYNRLDDDY…MGPGRHTPSD (68 aa). Residues 19-30 show a composition bias toward pro residues; the sequence is NRPPPHRTPSPG. Residue N80 is glycosylated (N-linked (GlcNAc...) asparagine). Residues 104–161 are disordered; that stretch reads HHDAYYNPTYTPTPNEAQTPYGEPGYEHDGRPLLPQQDSYGQYSDNPQQQQQQQGGLK. 2 stretches are compositionally biased toward polar residues: residues 111–121 and 139–150; these read PTYTPTPNEAQ and QQDSYGQYSDNP. 9 consecutive transmembrane segments (helical) span residues 449–469, 547–567, 577–597, 623–643, 656–676, 699–719, 731–751, 830–850, and 874–894; these read SAFGFISVLPGAFSAYRYIAL, RWLNGSFFAAIYAIAHFYQFF, IAFFIEFTFNTVNMIFAWFAI, ILGVCFEWLYGVSLITCFVLA, LAMIYFWAIIFCYLLFAAVFI, VVVTLILSIMSTYGIWLVASL, LVQYMLLSPTFTNVLNVYAFC, VVVLLWMVTNFGLAAVVLSTA, and VVLYSVAALSGFKFIGAMWFL.

It belongs to the chitin synthase family. Class II subfamily.

The protein localises to the cell membrane. The enzyme catalyses [(1-&gt;4)-N-acetyl-beta-D-glucosaminyl](n) + UDP-N-acetyl-alpha-D-glucosamine = [(1-&gt;4)-N-acetyl-beta-D-glucosaminyl](n+1) + UDP + H(+). Its function is as follows. Polymerizes chitin, a structural polymer of the cell wall and septum, by transferring the sugar moiety of UDP-GlcNAc to the non-reducing end of the growing chitin polymer. CHS1 and CHS3 have compensatory functions in cell wall modifications in responses to stresses. Might function as a negative regulator on expression of other CHS genes. The chain is Chitin synthase 3 from Pyricularia oryzae (strain 70-15 / ATCC MYA-4617 / FGSC 8958) (Rice blast fungus).